Here is a 172-residue protein sequence, read N- to C-terminus: Large ribosomal subunit protein uL10 (172 aa).

The protein belongs to the universal ribosomal protein uL10 family. Part of the ribosomal stalk of the 50S ribosomal subunit. The N-terminus interacts with L11 and the large rRNA to form the base of the stalk. The C-terminus forms an elongated spine to which L12 dimers bind in a sequential fashion forming a multimeric L10(L12)X complex.

Functionally, forms part of the ribosomal stalk, playing a central role in the interaction of the ribosome with GTP-bound translation factors. This is Large ribosomal subunit protein uL10 from Beijerinckia indica subsp. indica (strain ATCC 9039 / DSM 1715 / NCIMB 8712).